Here is a 211-residue protein sequence, read N- to C-terminus: Glycerol-3-phosphate acyltransferase (211 aa).

The next 4 helical transmembrane spans lie at 5-25 (ALGM…ILFC), 80-100 (PLYL…PVFF), 112-132 (FGAI…TWLL), and 138-158 (GYSS…VWWF).

This sequence belongs to the PlsY family. As to quaternary structure, probably interacts with PlsX.

Its subcellular location is the cell inner membrane. It carries out the reaction an acyl phosphate + sn-glycerol 3-phosphate = a 1-acyl-sn-glycero-3-phosphate + phosphate. It participates in lipid metabolism; phospholipid metabolism. Functionally, catalyzes the transfer of an acyl group from acyl-phosphate (acyl-PO(4)) to glycerol-3-phosphate (G3P) to form lysophosphatidic acid (LPA). This enzyme utilizes acyl-phosphate as fatty acyl donor, but not acyl-CoA or acyl-ACP. The chain is Glycerol-3-phosphate acyltransferase from Pectobacterium carotovorum subsp. carotovorum (strain PC1).